The chain runs to 72 residues: Translational regulator CsrA (72 aa).

The protein belongs to the CsrA/RsmA family. Homodimer; the beta-strands of each monomer intercalate to form a hydrophobic core, while the alpha-helices form wings that extend away from the core.

It localises to the cytoplasm. Functionally, a translational regulator that binds mRNA to regulate translation initiation and/or mRNA stability. Usually binds in the 5'-UTR at or near the Shine-Dalgarno sequence preventing ribosome-binding, thus repressing translation. Its main target seems to be the major flagellin gene, while its function is anatagonized by FliW. This chain is Translational regulator CsrA, found in Ruminiclostridium cellulolyticum (strain ATCC 35319 / DSM 5812 / JCM 6584 / H10) (Clostridium cellulolyticum).